Consider the following 739-residue polypeptide: Prestin (739 aa).

Residues 1 to 76 (MEHVTVSEEP…PILTWLPSYP (76 aa)) lie on the Cytoplasmic side of the membrane. Residues 77 to 106 (LKEYLFGDIVSGISTGVMQLPQGLAYAMLA) form a helical membrane-spanning segment. The Extracellular portion of the chain corresponds to 107-109 (AVP). Residues 110-127 (PVFGLYSSFYPVLLYTFF) traverse the membrane as a helical segment. The Cytoplasmic segment spans residues 128–138 (GTSKHISIGTF). Residues 139–152 (AVISLMIGGVAVRE) traverse the membrane as a helical segment. Topologically, residues 153–169 (APDSMFMVNGTNSSLVV) are extracellular. Asparagine 161 and asparagine 164 each carry an N-linked (GlcNAc...) asparagine glycan. A helical membrane pass occupies residues 170-199 (NIEARDSRRVEVVVALTTLVGIIQFVLGLL). At 200 to 209 (RFGFLAIYLT) the chain is on the cytoplasmic side. Residues 210-233 (EPLVRGFTTAAAVHVSVSQLKYLL) form a helical membrane-spanning segment. Topologically, residues 234 to 244 (GVKTARFNGPL) are extracellular. The helical intramembrane region spans 245–256 (SVVYSLDAVLRN). The Extracellular segment spans residues 257–261 (IADTN). Residues 262 to 285 (IVTLIIGLGCTVFLYIIKQLNERF) traverse the membrane as a helical segment. The Cytoplasmic portion of the chain corresponds to 286-294 (KKKLLIPIP). The chain crosses the membrane as a helical span at residues 295–310 (GEIIVVIVSTGISYGM). At 311-335 (LMSENYGVDVVGKIPTGLLPPKVPD) the chain is on the extracellular side. Residues 336–370 (FSVFPNLFADAVPIAVVGFSITISLAKTFALKYGY) traverse the membrane as a helical segment. Over 371–373 (SVD) the chain is Cytoplasmic. A helical membrane pass occupies residues 374–391 (GNQELIALGLCNFVSSFF). Topologically, residues 392-399 (HTFVVTAS) are extracellular. A helical membrane pass occupies residues 400–409 (MSRSLVQEST). Serine 401 is a salicylate binding site. Over 410 to 413 (GGHT) the chain is Cytoplasmic. The chain crosses the membrane as a helical span at residues 414-435 (EIAGLLASLLVLLVVVAIGFVF). Topologically, residues 436-439 (QPLP) are extracellular. Residues 440 to 467 (TTVLAAIIMVNLLGMFKQTRDIPVLWRK) form a helical membrane-spanning segment. Serine 468 is a topological domain (cytoplasmic). A helical membrane pass occupies residues 469 to 484 (KIELAIWLVSFFASVL). The Extracellular portion of the chain corresponds to 485-486 (LG). A helical transmembrane segment spans residues 487 to 507 (LDYGLAVAMAFAILTVIYRTQ). The interval 508–731 (RPKNVVLGQI…AVLQCKRWRD (224 aa)) is extended region for STAS domain. The Cytoplasmic portion of the chain corresponds to 508–739 (RPKNVVLGQI…RDLPVHPNIH (232 aa)). Residues 528-726 (EYEEAEECSG…PTIHDAVLQC (199 aa)) enclose the STAS domain.

It belongs to the SLC26A/SulP transporter (TC 2.A.53) family. In terms of assembly, homodimer. Interacts (via STAS domain) with CALM; this interaction is calcium-dependent. Expressed in hair cells of the auditory organs.

The protein localises to the cell membrane. The enzyme catalyses oxalate(in) + chloride(out) = oxalate(out) + chloride(in). It catalyses the reaction sulfate(out) + chloride(in) = sulfate(in) + chloride(out). Its activity is regulated as follows. Sulfate/chloride antiport activity is inhibited by salicylate; this inhibition is reversible. Functionally, electrogenic antiporter that exchanges sulfate or oxalate for chloride ion in a strictly coupled manner with a 1:1 stoichiometry. Adopts a dynamic conformation, which alternates between the exposure of the central binding site to the extra- and intracellular solutions leading to an inward-to-outward conformational transition during the transport cycle. Generates voltage-dependent charge movements resembling to the non-linear capacitance (NLC) of the cell membrane, but which are not associated to electromotile activity. This is Prestin from Danio rerio (Zebrafish).